The chain runs to 352 residues: MNAFLFEARIPRVVFGAGALQHLVREIDAMGSTRALVLSTPEQSADAERVAGILGSRAVGVFPRATMHVPIELAREARLEASRLGADCAVAIGGGSTTGLGKAIALESGLPILSIPTTYAGSEMTPIYGVTDNGVKQTGRDARVLPRTVIYDPELTLGLPIRMTVSSGLNAIAHAAESLYAHDGNPVIGLMAEEGIRAIGAALTPLQANPADLVARSDALYGAWLCGAVLGAVSMGLHHKLCHTLGGAFNLPHAELHTVILPHALAYNSARASQAMERIARALGVSSAPRGLFDLAERSGLPVSLAALGMPREGIELAADMAVKNPYPNPRPLERDAIRVLLEHAYDGVRPS.

Belongs to the iron-containing alcohol dehydrogenase family.

The catalysed reaction is 3-oxoadipate + NAD(+) = maleylacetate + NADH + H(+). It catalyses the reaction 3-oxoadipate + NADP(+) = maleylacetate + NADPH + H(+). It participates in xenobiotic degradation; (2,4,5-trichlorophenoxy)acetate degradation. The polypeptide is Maleylacetate reductase (tftE) (Burkholderia cepacia (Pseudomonas cepacia)).